Here is a 364-residue protein sequence, read N- to C-terminus: Histidinol-phosphate aminotransferase (364 aa).

Lysine 225 carries the N6-(pyridoxal phosphate)lysine modification.

The protein belongs to the class-II pyridoxal-phosphate-dependent aminotransferase family. Histidinol-phosphate aminotransferase subfamily. As to quaternary structure, homodimer. Pyridoxal 5'-phosphate serves as cofactor.

The catalysed reaction is L-histidinol phosphate + 2-oxoglutarate = 3-(imidazol-4-yl)-2-oxopropyl phosphate + L-glutamate. Its pathway is amino-acid biosynthesis; L-histidine biosynthesis; L-histidine from 5-phospho-alpha-D-ribose 1-diphosphate: step 7/9. The protein is Histidinol-phosphate aminotransferase of Sulfurovum sp. (strain NBC37-1).